We begin with the raw amino-acid sequence, 249 residues long: 2,3-bisphosphoglycerate-dependent phosphoglycerate mutase (249 aa).

Substrate contacts are provided by residues 8–15 (RHGESVWN), 21–22 (TG), R60, 87–90 (ERHY), K98, 114–115 (RR), and 183–184 (GN). H9 acts as the Tele-phosphohistidine intermediate in catalysis. E87 (proton donor/acceptor) is an active-site residue.

It belongs to the phosphoglycerate mutase family. BPG-dependent PGAM subfamily.

The enzyme catalyses (2R)-2-phosphoglycerate = (2R)-3-phosphoglycerate. It functions in the pathway carbohydrate degradation; glycolysis; pyruvate from D-glyceraldehyde 3-phosphate: step 3/5. Its function is as follows. Catalyzes the interconversion of 2-phosphoglycerate and 3-phosphoglycerate. The protein is 2,3-bisphosphoglycerate-dependent phosphoglycerate mutase of Chloroherpeton thalassium (strain ATCC 35110 / GB-78).